Here is a 160-residue protein sequence, read N- to C-terminus: 3-dehydroquinate dehydratase (160 aa).

Tyr22 functions as the Proton acceptor in the catalytic mechanism. Asn73, His79, and Asp86 together coordinate substrate. The active-site Proton donor is the His99. Substrate contacts are provided by residues 100–101 (IS) and Arg110.

The protein belongs to the type-II 3-dehydroquinase family. Homododecamer.

It catalyses the reaction 3-dehydroquinate = 3-dehydroshikimate + H2O. The protein operates within metabolic intermediate biosynthesis; chorismate biosynthesis; chorismate from D-erythrose 4-phosphate and phosphoenolpyruvate: step 3/7. Functionally, catalyzes a trans-dehydration via an enolate intermediate. This chain is 3-dehydroquinate dehydratase, found in Campylobacter lari (strain RM2100 / D67 / ATCC BAA-1060).